The primary structure comprises 284 residues: Bifunctional protein FolD (284 aa).

NADP(+) is bound by residues 165-167 (GAS), serine 190, and isoleucine 231.

Belongs to the tetrahydrofolate dehydrogenase/cyclohydrolase family. In terms of assembly, homodimer.

It carries out the reaction (6R)-5,10-methylene-5,6,7,8-tetrahydrofolate + NADP(+) = (6R)-5,10-methenyltetrahydrofolate + NADPH. The catalysed reaction is (6R)-5,10-methenyltetrahydrofolate + H2O = (6R)-10-formyltetrahydrofolate + H(+). It participates in one-carbon metabolism; tetrahydrofolate interconversion. In terms of biological role, catalyzes the oxidation of 5,10-methylenetetrahydrofolate to 5,10-methenyltetrahydrofolate and then the hydrolysis of 5,10-methenyltetrahydrofolate to 10-formyltetrahydrofolate. This Polynucleobacter asymbioticus (strain DSM 18221 / CIP 109841 / QLW-P1DMWA-1) (Polynucleobacter necessarius subsp. asymbioticus) protein is Bifunctional protein FolD.